We begin with the raw amino-acid sequence, 415 residues long: Cysteate synthase (415 aa).

An N6-(pyridoxal phosphate)lysine modification is found at Lys104. Pyridoxal 5'-phosphate contacts are provided by Asn131 and Thr376.

This sequence belongs to the threonine synthase family. Cysteate synthase subfamily. Homotrimer. Pyridoxal 5'-phosphate is required as a cofactor.

The catalysed reaction is O-phospho-L-serine + sulfite + H(+) = L-cysteate + phosphate. It participates in cofactor biosynthesis; coenzyme M biosynthesis. Specifically catalyzes the beta-elimination of phosphate from L-phosphoserine and the beta-addition of sulfite to the dehydroalanine intermediate to produce L-cysteate. The polypeptide is Cysteate synthase (Methanothrix thermoacetophila (strain DSM 6194 / JCM 14653 / NBRC 101360 / PT) (Methanosaeta thermophila)).